The following is a 720-amino-acid chain: F-box/LRR-repeat MAX2 homolog (720 aa).

The F-box domain occupies 14–60 (SSAILDLPEPLLLHILSFLTDVRSRHRAALACGRMRAAERATRSELS). 18 LRR repeats span residues 71 to 134 (LFLS…QNAF), 135 to 158 (IAAR…DPTT), 159 to 189 (LANL…PDGA), 190 to 218 (DLEP…DVVR), 219 to 247 (ALTT…FKSS), 248 to 279 (ELGP…VGDD), 280 to 316 (ALLS…ITVA), 317 to 344 (GLVA…EAAP), 345 to 372 (AMEA…KASW), 373 to 398 (LHLD…LTDA), 399 to 435 (SLAA…TLRP), 436 to 452 (TLKE…HTAE), 453 to 510 (CLTA…KCRY), 511 to 537 (MEFD…LLSP), 538 to 571 (LISA…PRTI), 572 to 606 (FGLS…GQMD), 607 to 644 (LSLW…SLTL), and 645 to 720 (PAVG…QIDD).

Associates to a SCF (SKP1-CUL1-F-box protein) E3 ubiquitin-protein ligase complex. Interacts with D14 in a strigolactone-dependent manner. Interacts with SKP1, SKP5 and SKP20. Expressed in leaves. Expressed in roots, culms, leaf blades, leaf sheaths, shoot bases and panicles.

The protein resides in the nucleus. Its function is as follows. Involved in strigolactone (SL) signaling. Required for responses to SLs and the establishment of arbuscular mycorrhiza symbiosis in rice. Strigolactone-dependent association of D3 with D14 and D53 (a repressor of SL signaling) triggers D53 ubiquitination and degradation. Controls tillering by suppressing axillary bud activity. Tiller is a specialized grain-bearing branch that is formed on the unelongated basal internode and grows independently of the mother stem (culm) by means of its own adventitious roots. The sequence is that of F-box/LRR-repeat MAX2 homolog from Oryza sativa subsp. japonica (Rice).